Here is a 453-residue protein sequence, read N- to C-terminus: Probable phenylalanine--tRNA ligase, mitochondrial (453 aa).

The transit peptide at 1–27 (MLLTLRVQGARHWLKSTRCLASSAAPA) directs the protein to the mitochondrion. Substrate-binding positions include 142-145 (TAHQ), Arg-164, 171-173 (THY), 178-180 (QAD), Glu-285, and Phe-310. The region spanning 356-453 (SHYPQCTNDL…SVDSFNVQIR (98 aa)) is the FDX-ACB domain.

It belongs to the class-II aminoacyl-tRNA synthetase family.

Its subcellular location is the mitochondrion matrix. The catalysed reaction is tRNA(Phe) + L-phenylalanine + ATP = L-phenylalanyl-tRNA(Phe) + AMP + diphosphate + H(+). In terms of biological role, is responsible for the charging of tRNA(Phe) with phenylalanine in mitochondrial translation. The protein is Probable phenylalanine--tRNA ligase, mitochondrial of Drosophila melanogaster (Fruit fly).